The primary structure comprises 333 residues: COMPASS-like H3K4 histone methylase component WDR5B (333 aa).

WD repeat units lie at residues 1–40 (MPSGGNGTSNGVANANSTGNAGTSGNVPIYKPYRHLKTLE), 41–80 (GHTAAISCVKFSNDGNLLASASVDKTMILWSATNYSLIHR), 83–122 (GHSSGISDLAWSSDSHYTCSASDDCTLRIWDARSPYECLK), 126–167 (GHTN…RMIK), 169–207 (HSMPISSVHFNRDGSLIVSASHDGSCKIWDAKEGTCLKT), 211–252 (DKSP…KVYT), 253–295 (GHTN…ILQR), and 298–333 (GHTDAVISVSCHPVQNEISSSGNHLDKTIRIWKQDA).

As to quaternary structure, unlike WDR5A, does not interact with RBL or TRO.

The chain is COMPASS-like H3K4 histone methylase component WDR5B from Arabidopsis thaliana (Mouse-ear cress).